The primary structure comprises 289 residues: NADPH-dependent 7-cyano-7-deazaguanine reductase (289 aa).

81 to 83 contributes to the substrate binding site; that stretch reads IES. Position 83-84 (83-84) interacts with NADPH; it reads SK. Cys196 (thioimide intermediate) is an active-site residue. Asp203 functions as the Proton donor in the catalytic mechanism. Residue 235 to 236 participates in substrate binding; the sequence is HE. 264-265 provides a ligand contact to NADPH; that stretch reads RG.

This sequence belongs to the GTP cyclohydrolase I family. QueF type 2 subfamily. As to quaternary structure, homodimer.

The protein localises to the cytoplasm. The catalysed reaction is 7-aminomethyl-7-carbaguanine + 2 NADP(+) = 7-cyano-7-deazaguanine + 2 NADPH + 3 H(+). It functions in the pathway tRNA modification; tRNA-queuosine biosynthesis. In terms of biological role, catalyzes the NADPH-dependent reduction of 7-cyano-7-deazaguanine (preQ0) to 7-aminomethyl-7-deazaguanine (preQ1). This chain is NADPH-dependent 7-cyano-7-deazaguanine reductase, found in Albidiferax ferrireducens (strain ATCC BAA-621 / DSM 15236 / T118) (Rhodoferax ferrireducens).